The primary structure comprises 354 residues: S-adenosylmethionine:tRNA ribosyltransferase-isomerase (354 aa).

It belongs to the QueA family. Monomer.

The protein localises to the cytoplasm. It catalyses the reaction 7-aminomethyl-7-carbaguanosine(34) in tRNA + S-adenosyl-L-methionine = epoxyqueuosine(34) in tRNA + adenine + L-methionine + 2 H(+). The protein operates within tRNA modification; tRNA-queuosine biosynthesis. Functionally, transfers and isomerizes the ribose moiety from AdoMet to the 7-aminomethyl group of 7-deazaguanine (preQ1-tRNA) to give epoxyqueuosine (oQ-tRNA). The polypeptide is S-adenosylmethionine:tRNA ribosyltransferase-isomerase (Thermosynechococcus vestitus (strain NIES-2133 / IAM M-273 / BP-1)).